A 154-amino-acid chain; its full sequence is Keratin-associated protein 9-9 (154 aa).

14 consecutive repeat copies span residues cysteine 8–threonine 12, cysteine 13–threonine 17, cysteine 18–threonine 22, cysteine 37–serine 41, cysteine 42–serine 46, cysteine 51–alanine 55, cysteine 56–threonine 60, cysteine 61–threonine 65, cysteine 66–threonine 70, cysteine 75–threonine 79, cysteine 124–alanine 128, cysteine 129–threonine 133, cysteine 134–threonine 137, and cysteine 148–serine 152. Residues cysteine 8–serine 152 form a 14 X 5 AA repeats of C-C-[RQVGE]-[SPSTNQ]-[TASL] region.

The protein belongs to the KRTAP type 9 family. As to quaternary structure, interacts with hair keratins.

Its function is as follows. In the hair cortex, hair keratin intermediate filaments are embedded in an interfilamentous matrix, consisting of hair keratin-associated proteins (KRTAP), which are essential for the formation of a rigid and resistant hair shaft through their extensive disulfide bond cross-linking with abundant cysteine residues of hair keratins. The matrix proteins include the high-sulfur and high-glycine-tyrosine keratins. This chain is Keratin-associated protein 9-9 (KRTAP9-9), found in Homo sapiens (Human).